A 310-amino-acid chain; its full sequence is Protoheme IX farnesyltransferase (310 aa).

A run of 9 helical transmembrane segments spans residues 26–45 (VMSLVVFTALVGLLVAPVTV), 49–71 (IALTGILFIALGAGASGALNMWW), 95–115 (GEALGIGLALSGIAVVMLGLA), 118–138 (LFAAGLLAFTIFFYAVVYSMW), 147–167 (IVIGGAAGAFPPMIGWAVATG), 174–194 (LFMFALIFMWTPPHFWSLALF), 220–240 (VLVYSLLLAPLAVAGAFTGIG), 243–263 (LYLATALALNGWLLVGAVRIW), and 289–309 (LFLHFGAILAEAALKPYGLGG).

It belongs to the UbiA prenyltransferase family. Protoheme IX farnesyltransferase subfamily. In terms of assembly, interacts with CtaA.

It localises to the cell inner membrane. It carries out the reaction heme b + (2E,6E)-farnesyl diphosphate + H2O = Fe(II)-heme o + diphosphate. Its pathway is porphyrin-containing compound metabolism; heme O biosynthesis; heme O from protoheme: step 1/1. Converts heme B (protoheme IX) to heme O by substitution of the vinyl group on carbon 2 of heme B porphyrin ring with a hydroxyethyl farnesyl side group. The protein is Protoheme IX farnesyltransferase of Cereibacter sphaeroides (strain ATCC 17029 / ATH 2.4.9) (Rhodobacter sphaeroides).